Consider the following 992-residue polypeptide: RNA-binding motif protein, X-linked-like-3 (992 aa).

In terms of domain architecture, RRM spans 8–86 (EKLFVGGLNL…KAIMVAQTIK (79 aa)). 7 disordered regions span residues 91 to 130 (SSRWVPPTPGSGSRSRFSHRTRGGGSSPQRPPSQGRPDDG), 144 to 169 (APMPRKRGPPPRHCASPPHKRRDPGD), 188 to 207 (PDYCPXRGDGNRNGYRGRDH), 278 to 385 (DHLP…DSSS), 397 to 511 (EEYQ…HRYR), 562 to 588 (SLDANSGGRSPNAYSGGHDSSSRSHRY), and 644 to 992 (NSGG…QSRY). Positions 284–296 (YSGGRSSSSNSYS) are enriched in low complexity. A compositionally biased stretch (basic and acidic residues) spans 297-316 (RSDRYGEEGCYEEYRGRSPD). Residues 318-334 (HSGGRNSSSNSYGQSHH) are compositionally biased toward low complexity. Residues 335-371 (YGGEGRYEEYRGRYEEYRGRSHEARSGGRSTDAHSGG) are compositionally biased toward basic and acidic residues. Residues 454-471 (THSGGRSSSSNSYGQSHR) are compositionally biased toward low complexity. Residues 472 to 488 (YGGEGHYEYRGRSHDAH) are compositionally biased toward basic and acidic residues. Polar residues-rich tracts occupy residues 564–574 (DANSGGRSPNA), 644–664 (NSGGCSPNAYSGGHDSSSQSH), and 752–774 (DANSGGRSPNAYSGGRDSSSNSY). Positions 785 to 798 (HYEEYRGRSHDTHS) are enriched in basic and acidic residues. The segment covering 818–828 (GRNSFSNSYGQ) has biased composition (polar residues). Composition is skewed to basic and acidic residues over residues 831 to 842 (HYGRGGRYEEYQ), 920 to 948 (SGDHDRSSNSYGRSDRYSRGRDRVGRPDR), and 981 to 992 (GRFERGEGQSRY).

This Pan troglodytes (Chimpanzee) protein is RNA-binding motif protein, X-linked-like-3 (RBMXL3).